The sequence spans 47 residues: PhoP/PhoQ regulator MgrB (47 aa).

Residues 6–26 form a helical membrane-spanning segment; that stretch reads WVILIIVALVCLLLWAQVFNI.

Belongs to the MgrB family. As to quaternary structure, may form homooligomers. Probably interacts with the periplasmic domain of PhoQ.

The protein localises to the cell inner membrane. Functionally, phoP-regulated transcription is redox-sensitive, being activated when the periplasm becomes more reducing. MgrB acts between DsbA/DsbB and PhoP/PhoQ in this pathway. Represses PhoP/PhoQ signaling, possibly by binding to the periplasmic domain of PhoQ, altering its activity and that of downstream effector PhoP. In Citrobacter koseri (strain ATCC BAA-895 / CDC 4225-83 / SGSC4696), this protein is PhoP/PhoQ regulator MgrB.